Reading from the N-terminus, the 447-residue chain is MGRLFGTDGVRGIANKELTPQLAFELGRAGAYVLTEGSHRPKVVVGKDSRISSDMLECALIAGLTSLGAEVVSVGIIPTPAVAYLTRLYKADAGVMISASHNPIEYNGIKFFDKFGYKLPDKLEDRIEEIINEKKELPVPTGIGIGRRKESLTSHRDYIEFLKSTIDTDLKGLKIVIDCAYGASSTVAPILFKELGAEVIAYAAELLGEKINVGCGSTHPEKLQQLVVEHKADLGLAFDGDADRLIAVDEKGNIVDGDHIMAICAIDMKSKGKLKHNTVVATVMSNIGFEIALKEHGIKLIRTKVGDRYVLEEMIKGGYSIGGEQSGHIIFIDDNTTGDGEITALKLCSIMKHTGKKLSELASCMTTYPQVLVNAKVKNELKEKYLEDEDIKREIEKLEKEMEGKGRVLIRPSGTEPLIRVMVEGEDYAKISQMAKELADLIERKLN.

Ser100 serves as the catalytic Phosphoserine intermediate. Mg(2+) is bound by residues Ser100, Asp239, Asp241, and Asp243. Ser100 is subject to Phosphoserine.

It belongs to the phosphohexose mutase family. The cofactor is Mg(2+). Activated by phosphorylation.

The enzyme catalyses alpha-D-glucosamine 1-phosphate = D-glucosamine 6-phosphate. Its function is as follows. Catalyzes the conversion of glucosamine-6-phosphate to glucosamine-1-phosphate. This is Phosphoglucosamine mutase from Caldanaerobacter subterraneus subsp. tengcongensis (strain DSM 15242 / JCM 11007 / NBRC 100824 / MB4) (Thermoanaerobacter tengcongensis).